A 291-amino-acid chain; its full sequence is 4,5:9,10-diseco-3-hydroxy-5,9,17-trioxoandrosta-1(10),2-diene-4-oate hydrolase (291 aa).

Substrate is bound by residues 45–46, asparagine 54, asparagine 113, leucine 115, and arginine 192; that span reads GG. Histidine 269 serves as the catalytic Proton acceptor. Residue tryptophan 270 coordinates substrate.

This sequence belongs to the AB hydrolase superfamily. HsaD family. As to quaternary structure, homodimer.

The catalysed reaction is (1E,2Z)-3-hydroxy-5,9,17-trioxo-4,5:9,10-disecoandrosta-1(10),2-dien-4-oate + H2O = 3-[(3aS,4S,7aS)-7a-methyl-1,5-dioxo-octahydro-1H-inden-4-yl]propanoate + (2Z,4Z)-2-hydroxyhexa-2,4-dienoate + H(+). It catalyses the reaction 2,6-dioxo-6-phenylhexa-3-enoate + H2O = 2-oxopent-4-enoate + benzoate + H(+). It participates in lipid metabolism; steroid biosynthesis. Catalyzes the hydrolysis of a carbon-carbon bond in 4,5: 9,10-diseco-3-hydroxy-5,9,17-trioxoandrosta-1(10),2-diene-4-oate (4,9-DSHA) to yield 9,17-dioxo-1,2,3,4,10,19-hexanorandrostan-5-oate (DOHNAA) and 2-hydroxy-hexa-2,4-dienoate (HHD). Is also able to catalyze the hydrolysis of 2-hydroxy-6-oxo-6-phenylhexa-2,4-dienoic acid (HOPDA) and the synthetic analog 8-(2-chlorophenyl)-2-hydroxy-5-methyl-6-oxoocta-2,4-dienoic acid (HOPODA). The protein is 4,5:9,10-diseco-3-hydroxy-5,9,17-trioxoandrosta-1(10),2-diene-4-oate hydrolase (hsaD) of Mycobacterium tuberculosis (strain ATCC 25618 / H37Rv).